A 235-amino-acid chain; its full sequence is tRNA (cytidine-2'-O-)-methyltransferase TrmJ (235 aa).

S-adenosyl-L-methionine is bound by residues 77–79 (TSS), G111, I131, and 138–140 (PVL).

It belongs to the class IV-like SAM-binding methyltransferase superfamily. RNA methyltransferase TrmH family. As to quaternary structure, homodimer.

Its subcellular location is the cytoplasm. It catalyses the reaction cytidine(32) in tRNA + S-adenosyl-L-methionine = 2'-O-methylcytidine(32) in tRNA + S-adenosyl-L-homocysteine + H(+). Functionally, catalyzes the formation of 2'O-methylated cytidine (Cm32) at position 32 in tRNA. Is specific for cytidine. The protein is tRNA (cytidine-2'-O-)-methyltransferase TrmJ of Sulfolobus acidocaldarius (strain ATCC 33909 / DSM 639 / JCM 8929 / NBRC 15157 / NCIMB 11770).